The following is a 354-amino-acid chain: Methylthioribose-1-phosphate isomerase (354 aa).

Substrate contacts are provided by residues 48 to 50 (RGA), arginine 95, and glutamine 202. Residue aspartate 243 is the Proton donor of the active site. Substrate is bound at residue 253–254 (NK).

The protein belongs to the eIF-2B alpha/beta/delta subunits family. MtnA subfamily.

The enzyme catalyses 5-(methylsulfanyl)-alpha-D-ribose 1-phosphate = 5-(methylsulfanyl)-D-ribulose 1-phosphate. It functions in the pathway amino-acid biosynthesis; L-methionine biosynthesis via salvage pathway; L-methionine from S-methyl-5-thio-alpha-D-ribose 1-phosphate: step 1/6. In terms of biological role, catalyzes the interconversion of methylthioribose-1-phosphate (MTR-1-P) into methylthioribulose-1-phosphate (MTRu-1-P). In Roseiflexus castenholzii (strain DSM 13941 / HLO8), this protein is Methylthioribose-1-phosphate isomerase.